The chain runs to 186 residues: Mitoferrin-2B (186 aa).

Residues 75-163 (SNVTAHMLAG…FACYEKLKKT (89 aa)) form a Solcar repeat. 3 helical membrane-spanning segments follow: residues 77-96 (VTAHMLAGAVAGVMEHCLMY), 137-157 (RGLNVTATGAGPAHALYFACY), and 172-185 (GNCHVANGIDNSCP).

It belongs to the mitochondrial carrier (TC 2.A.29) family.

It localises to the mitochondrion inner membrane. The catalysed reaction is Fe(2+)(in) = Fe(2+)(out). Its function is as follows. Mitochondrial iron transporter that mediates iron uptake. Probably required for heme synthesis of hemoproteins and Fe-S cluster assembly in non-erythroid cells. This Xenopus laevis (African clawed frog) protein is Mitoferrin-2B (slc25a28-b).